The sequence spans 159 residues: tRNA-specific adenosine deaminase (159 aa).

The region spanning Glu6 to Glu133 is the CMP/dCMP-type deaminase domain. His57 contributes to the Zn(2+) binding site. Glu59 (proton donor) is an active-site residue. Zn(2+) is bound by residues Cys87 and Cys90.

It belongs to the cytidine and deoxycytidylate deaminase family. Homodimer. Zn(2+) is required as a cofactor.

It catalyses the reaction adenosine(34) in tRNA + H2O + H(+) = inosine(34) in tRNA + NH4(+). Functionally, catalyzes the deamination of adenosine to inosine at the wobble position 34 of tRNA(Arg2). The chain is tRNA-specific adenosine deaminase from Streptococcus pyogenes serotype M18 (strain MGAS8232).